The primary structure comprises 197 residues: Phospholipid hydroperoxide glutathione peroxidase (197 aa).

Ser-40 is modified (phosphoserine). Sec-73 is a catalytic residue. A non-standard amino acid (selenocysteine) is located at residue Sec-73. The residue at position 78 (Val-78) is a Phosphoserine.

This sequence belongs to the glutathione peroxidase family. As to quaternary structure, monomer. Has a tendency to form higher mass oligomers. Interacts with FUNDC1; this interaction promotes GPX4 recruitment into mitochondria through TOM/TIM complex where it is degraded by mitophagy. In terms of tissue distribution, present primarily in testis. Expressed in flagella of epididymal sperm. Isoform Cytoplasmic: Highly expressed in testis. Present in spermatogonia, spermatocyte and spermatid (at protein level).

Its subcellular location is the nucleus. The protein resides in the nucleolus. It localises to the mitochondrion. The protein localises to the cytoplasm. The catalysed reaction is a hydroperoxy polyunsaturated fatty acid + 2 glutathione = a hydroxy polyunsaturated fatty acid + glutathione disulfide + H2O. It catalyses the reaction 2 glutathione + H2O2 = glutathione disulfide + 2 H2O. It carries out the reaction tert-butyl hydroperoxide + 2 glutathione = tert-butanol + glutathione disulfide + H2O. The enzyme catalyses cumene hydroperoxide + 2 glutathione = 2-phenylpropan-2-ol + glutathione disulfide + H2O. The catalysed reaction is (9S)-hydroperoxy-(10E,12Z)-octadecadienoate + 2 glutathione = (9S)-hydroxy-(10E,12Z)-octadecadienoate + glutathione disulfide + H2O. It catalyses the reaction (13S)-hydroperoxy-(9Z,11E)-octadecadienoate + 2 glutathione = (13S)-hydroxy-(9Z,11E)-octadecadienoate + glutathione disulfide + H2O. It carries out the reaction (5S)-hydroperoxy-(6E,8Z,11Z,14Z)-eicosatetraenoate + 2 glutathione = (5S)-hydroxy-(6E,8Z,11Z,14Z)-eicosatetraenoate + glutathione disulfide + H2O. The enzyme catalyses (12R)-hydroperoxy-(5Z,8Z,10E,14Z)-eicosatetraenoate + 2 glutathione = (12R)-hydroxy-(5Z,8Z,10E,14Z)-eicosatetraenoate + glutathione disulfide + H2O. The catalysed reaction is (12S)-hydroperoxy-(5Z,8Z,10E,14Z)-eicosatetraenoate + 2 glutathione = (12S)-hydroxy-(5Z,8Z,10E,14Z)-eicosatetraenoate + glutathione disulfide + H2O. It catalyses the reaction (15S)-hydroperoxy-(5Z,8Z,11Z,13E)-eicosatetraenoate + 2 glutathione = (15S)-hydroxy-(5Z,8Z,11Z,13E)-eicosatetraenoate + glutathione disulfide + H2O. It carries out the reaction (5S)-hydroperoxy-(6E,8Z,11Z,14Z,17Z)-eicosapentaenoate + 2 glutathione = (5S)-hydroxy-(6E,8Z,11Z,14Z,17Z)-eicosapentaenoate + glutathione disulfide + H2O. The enzyme catalyses (12S)-hydroperoxy-(5Z,8Z,10E,14Z,17Z)-eicosapentaenoate + 2 glutathione = (12S)-hydroxy-(5Z,8Z,10E,14Z,17Z)-eicosapentaenoate + glutathione disulfide + H2O. The catalysed reaction is (15S)-hydroperoxy-(5Z,8Z,11Z,13E,17Z)-eicosapentaenoate + 2 glutathione = (15S)-hydroxy-(5Z,8Z,11Z,13E,17Z)-eicosapentaenoate + glutathione disulfide + H2O. It catalyses the reaction (15S)-hydroperoxy-(11Z,13E)-eicosadienoate + 2 glutathione = (15S)-hydroxy-(11Z,13E)-eicosadienoate + glutathione disulfide + H2O. It carries out the reaction (17S)-hydroperoxy-(4Z,7Z,10Z,13Z,15E,19Z)-docosahexaenoate + 2 glutathione = (17S)-hydroxy-(4Z,7Z,10Z,13Z,15E,19Z)-docosahexaenoate + glutathione disulfide + H2O. The enzyme catalyses a hydroperoxy-1,2-diacyl-glycero-3-phosphocholine + 2 glutathione = a hydroxy-1,2-diacyl-glycero-3-phosphocholine + glutathione disulfide + H2O. Essential antioxidant peroxidase that directly reduces phospholipid hydroperoxide even if they are incorporated in membranes and lipoproteins. Can also reduce fatty acid hydroperoxide, cholesterol hydroperoxide and thymine hydroperoxide. Plays a key role in protecting cells from oxidative damage by preventing membrane lipid peroxidation. Required to prevent cells from ferroptosis, a non-apoptotic cell death resulting from an iron-dependent accumulation of lipid reactive oxygen species. The presence of selenocysteine (Sec) versus Cys at the active site is essential for life: it provides resistance to overoxidation and prevents cells against ferroptosis. The presence of Sec at the active site is also essential for the survival of a specific type of parvalbumin-positive interneurons, thereby preventing against fatal epileptic seizures. May be required to protect cells from the toxicity of ingested lipid hydroperoxides. Required for normal sperm development and male fertility. Essential for maturation and survival of photoreceptor cells. Plays a role in a primary T-cell response to viral and parasitic infection by protecting T-cells from ferroptosis and by supporting T-cell expansion. Plays a role of glutathione peroxidase in platelets in the arachidonic acid metabolism. Reduces hydroperoxy ester lipids formed by a 15-lipoxygenase that may play a role as down-regulator of the cellular 15-lipoxygenase pathway. Can also reduce small soluble hydroperoxides such as H2O2, cumene hydroperoxide and tert-butyl hydroperoxide. Its function is as follows. Specifically able to suppress the production of leukotriene and prostaglandin in response to several stimuli by reducing fatty acid hydroperoxide. In terms of biological role, specifically required to prevent mitochondrial cell death by mediating reduction of cardiolipin hydroperoxide. Also required for normal sperm development and male fertility. Functionally, required for male fertility by stabilizing the condensed chromatin in sperm nuclei. The chain is Phospholipid hydroperoxide glutathione peroxidase from Rattus norvegicus (Rat).